Reading from the N-terminus, the 78-residue chain is UPF0270 protein YPTB3725 (78 aa).

It belongs to the UPF0270 family.

The protein is UPF0270 protein YPTB3725 of Yersinia pseudotuberculosis serotype I (strain IP32953).